The sequence spans 238 residues: Aspartate/glutamate leucyltransferase (238 aa).

This sequence belongs to the R-transferase family. Bpt subfamily.

It is found in the cytoplasm. The enzyme catalyses N-terminal L-glutamyl-[protein] + L-leucyl-tRNA(Leu) = N-terminal L-leucyl-L-glutamyl-[protein] + tRNA(Leu) + H(+). The catalysed reaction is N-terminal L-aspartyl-[protein] + L-leucyl-tRNA(Leu) = N-terminal L-leucyl-L-aspartyl-[protein] + tRNA(Leu) + H(+). Functionally, functions in the N-end rule pathway of protein degradation where it conjugates Leu from its aminoacyl-tRNA to the N-termini of proteins containing an N-terminal aspartate or glutamate. This chain is Aspartate/glutamate leucyltransferase, found in Shewanella sp. (strain MR-4).